We begin with the raw amino-acid sequence, 837 residues long: Phenylalanine--tRNA ligase beta subunit (837 aa).

The tRNA-binding domain maps to 39–149 (SASLEGIVTG…EMNIAIPKIG (111 aa)). One can recognise a B5 domain in the interval 415-520 (IEEQLLLLRR…RLIGYDRFDS (106 aa)). Residues aspartate 498, aspartate 504, glutamate 507, and glutamate 508 each contribute to the Mg(2+) site. Positions 743–836 (PTVPSMERDI…LKVEFSAELR (94 aa)) constitute an FDX-ACB domain.

It belongs to the phenylalanyl-tRNA synthetase beta subunit family. Type 1 subfamily. Tetramer of two alpha and two beta subunits. Mg(2+) serves as cofactor.

The protein resides in the cytoplasm. The catalysed reaction is tRNA(Phe) + L-phenylalanine + ATP = L-phenylalanyl-tRNA(Phe) + AMP + diphosphate + H(+). This chain is Phenylalanine--tRNA ligase beta subunit, found in Prochlorococcus marinus (strain SARG / CCMP1375 / SS120).